Here is a 476-residue protein sequence, read N- to C-terminus: Probable secreted beta-glucosidase SIM1 (476 aa).

The N-terminal stretch at 1–19 (MKFSTAVTTLISSGAIVSA) is a signal peptide. The span at 111–203 (ATASTSQGAS…SSSSSSSGSG (93 aa)) shows a compositional bias: low complexity. A disordered region spans residues 111–214 (ATASTSQGAS…IYGDLADFSG (104 aa)). An N-linked (GlcNAc...) asparagine glycan is attached at asparagine 423.

This sequence belongs to the SUN family.

Its subcellular location is the secreted. The protein localises to the cell wall. Its function is as follows. Involved in the remodeling of the cell wall during the various phases of yeast culture development and under various environmental conditions. Required for the maintenance of the CLB5 kinase activity. The protein is Probable secreted beta-glucosidase SIM1 (SIM1) of Saccharomyces cerevisiae (strain ATCC 204508 / S288c) (Baker's yeast).